The following is a 140-amino-acid chain: Putative pre-16S rRNA nuclease (140 aa).

It belongs to the YqgF nuclease family.

The protein resides in the cytoplasm. In terms of biological role, could be a nuclease involved in processing of the 5'-end of pre-16S rRNA. In Serratia proteamaculans (strain 568), this protein is Putative pre-16S rRNA nuclease.